The primary structure comprises 886 residues: Microsomal triglyceride transfer protein (886 aa).

Residues 1 to 24 (MLRLAGLLLCVTSFLSTSSLGANA) form the signal peptide. A Vitellogenin domain is found at 28–662 (LDNDRLYRYS…QSNNALLHGL (635 aa)). Disulfide bonds link cysteine 174-cysteine 194 and cysteine 440-cysteine 445.

Heterodimer; heterodimerizes with the protein disulfide isomerase. Interacts with apolipoprotein B.

The protein localises to the endoplasmic reticulum. Catalyzes the transport of triglyceride, cholesteryl ester, and phospholipid between phospholipid surfaces. Required for the secretion of plasma lipoproteins that contain apolipoprotein B. This chain is Microsomal triglyceride transfer protein, found in Megalobrama amblycephala (Chinese blunt snout bream).